A 513-amino-acid polypeptide reads, in one-letter code: ATP synthase subunit alpha 2 (513 aa).

152–159 (GDSKTGKT) serves as a coordination point for ATP.

It belongs to the ATPase alpha/beta chains family. F-type ATPases have 2 components, CF(1) - the catalytic core - and CF(0) - the membrane proton channel. CF(1) has five subunits: alpha(3), beta(3), gamma(1), delta(1), epsilon(1). CF(0) has three main subunits: a(1), b(2) and c(9-12). The alpha and beta chains form an alternating ring which encloses part of the gamma chain. CF(1) is attached to CF(0) by a central stalk formed by the gamma and epsilon chains, while a peripheral stalk is formed by the delta and b chains.

Its subcellular location is the cell membrane. It carries out the reaction ATP + H2O + 4 H(+)(in) = ADP + phosphate + 5 H(+)(out). In terms of biological role, produces ATP from ADP in the presence of a proton gradient across the membrane. The alpha chain is a regulatory subunit. This chain is ATP synthase subunit alpha 2, found in Mycoplasmopsis pulmonis (strain UAB CTIP) (Mycoplasma pulmonis).